Consider the following 763-residue polypeptide: Phosphoglycerol transferase I (763 aa).

A run of 4 helical transmembrane segments spans residues 1–21 (MSELLSVALFLASVLIYAWKA), 26–46 (WWFAATLTVLGLFVILNITLY), 77–97 (ILPGIGIALALVAVFGALGWV), and 108–128 (VGYSLLALLLALGSVDASPAF).

Belongs to the OpgB family.

It localises to the cell inner membrane. The enzyme catalyses a phosphatidylglycerol + a membrane-derived-oligosaccharide D-glucose = a 1,2-diacyl-sn-glycerol + a membrane-derived-oligosaccharide 6-(glycerophospho)-D-glucose.. It functions in the pathway glycan metabolism; osmoregulated periplasmic glucan (OPG) biosynthesis. Its function is as follows. Transfers a phosphoglycerol residue from phosphatidylglycerol to the membrane-bound nascent glucan backbones. In Salmonella schwarzengrund (strain CVM19633), this protein is Phosphoglycerol transferase I.